Consider the following 137-residue polypeptide: MKQRTLSIIKPDALKKKVVGKIIDRFESNGLEVIAMKRLHLSVKDAENFYAIHRERPFFKDLIEFMVSGPVVVMVLEGKDAVAKNRDLMGATDPKLAQKGTIRADFAESIDANAVHGSDSLENARNEIAFFFAARDL.

ATP-binding residues include Lys-10, Phe-58, Arg-86, Thr-92, Arg-103, and Asn-113. His-116 (pros-phosphohistidine intermediate) is an active-site residue.

The protein belongs to the NDK family. As to quaternary structure, homotetramer. Mg(2+) is required as a cofactor.

The protein localises to the cytoplasm. The catalysed reaction is a 2'-deoxyribonucleoside 5'-diphosphate + ATP = a 2'-deoxyribonucleoside 5'-triphosphate + ADP. It carries out the reaction a ribonucleoside 5'-diphosphate + ATP = a ribonucleoside 5'-triphosphate + ADP. Functionally, major role in the synthesis of nucleoside triphosphates other than ATP. The ATP gamma phosphate is transferred to the NDP beta phosphate via a ping-pong mechanism, using a phosphorylated active-site intermediate. This chain is Nucleoside diphosphate kinase, found in Helicobacter pylori (strain Shi470).